Consider the following 432-residue polypeptide: Adenylosuccinate synthetase (432 aa).

GTP is bound by residues 13-19 (GDEGKGK) and 41-43 (GHT). Aspartate 14 serves as the catalytic Proton acceptor. Mg(2+) is bound by residues aspartate 14 and glycine 41. IMP is bound by residues 14 to 17 (DEGK), 39 to 42 (NAGH), threonine 130, arginine 144, glutamine 225, threonine 240, and arginine 304. Histidine 42 acts as the Proton donor in catalysis. A substrate-binding site is contributed by 300 to 306 (AVTGRPR). Residues arginine 306, 332 to 334 (KLD), and 415 to 417 (STG) each bind GTP.

The protein belongs to the adenylosuccinate synthetase family. Homodimer. It depends on Mg(2+) as a cofactor.

It localises to the cytoplasm. The enzyme catalyses IMP + L-aspartate + GTP = N(6)-(1,2-dicarboxyethyl)-AMP + GDP + phosphate + 2 H(+). Its pathway is purine metabolism; AMP biosynthesis via de novo pathway; AMP from IMP: step 1/2. Its function is as follows. Plays an important role in the de novo pathway of purine nucleotide biosynthesis. Catalyzes the first committed step in the biosynthesis of AMP from IMP. This Glaesserella parasuis serovar 5 (strain SH0165) (Haemophilus parasuis) protein is Adenylosuccinate synthetase.